The chain runs to 535 residues: High-affinity fructose transporter ght6 (535 aa).

Residues 1-9 lie on the Cytoplasmic side of the membrane; it reads MAKILTIVM. Residues 10-30 form a helical membrane-spanning segment; sequence LVFVSMAGWMFGADTGSIGGI. Residues 31–58 are Extracellular-facing; the sequence is TNMRDFQSRYADRYDPVTDTYSYSSARQ. The helical transmembrane segment at 59 to 79 threads the bilayer; the sequence is GLLVGMVNTGTTVGCLLSSPL. Residues 80–87 lie on the Cytoplasmic side of the membrane; it reads GDRFGKRK. Residues 88–108 traverse the membrane as a helical segment; it reads CIMGWTLVYITGVIVQLTTIP. Residues 109–112 are Extracellular-facing; the sequence is SWVQ. A helical membrane pass occupies residues 113–133; that stretch reads MMVAKIWTGLGIGALSVIAPG. Residues 134-144 lie on the Cytoplasmic side of the membrane; that stretch reads YQSESSPPHIR. Residues 145 to 165 traverse the membrane as a helical segment; the sequence is GAIVTTYQLFITLGIFIAACI. The Extracellular portion of the chain corresponds to 166 to 181; the sequence is NMGTHKYTTHPEAQWR. A helical transmembrane segment spans residues 182–202; sequence VPIGINLLWGILMFFGMLFLP. The Cytoplasmic segment spans residues 203-268; that stretch reads ESPRYLAVKG…IFSNEIRYRT (66 aa). The helical transmembrane segment at 269–287 threads the bilayer; that stretch reads LLGMGVMAFQQLTGNNYFF. Over 288 to 303 the chain is Extracellular; it reads YYGTQVFRGTGLNSPF. Residues 304–324 traverse the membrane as a helical segment; that stretch reads LAALILDAVNFGCTFGAIFVL. Topologically, residues 325 to 330 are cytoplasmic; sequence EYFGRR. Residues 331 to 351 form a helical membrane-spanning segment; sequence GPLIVGGVWQSICFFIYASVG. At 352–365 the chain is on the extracellular side; sequence DRALTRPNGTSNHR. Asn-359 carries an N-linked (GlcNAc...) asparagine glycan. Residues 366-386 form a helical membrane-spanning segment; that stretch reads AGAVMIVFSCLFIFSFAQTWA. The Cytoplasmic portion of the chain corresponds to 387 to 406; sequence PAAYVIVGESYPIRYRSKCA. A helical membrane pass occupies residues 407-427; that stretch reads AVATASNWFWNFMISFFTPFI. Over 428–434 the chain is Extracellular; the sequence is SNSIGFK. A helical membrane pass occupies residues 435-455; the sequence is YGYVFAACNLCAAIIIFLFAK. The Cytoplasmic segment spans residues 456–535; it reads ETKGLTLEEI…PQQVTNPVGL (80 aa). The span at 484–508 shows a compositional bias: basic and acidic residues; it reads DREDIKQSDSEKERGPTSKLHEYVE. The disordered stretch occupies residues 484 to 535; sequence DREDIKQSDSEKERGPTSKLHEYVEHAPNSYASTHSTESENYPQQVTNPVGL. The segment covering 513–535 has biased composition (polar residues); the sequence is SYASTHSTESENYPQQVTNPVGL.

This sequence belongs to the major facilitator superfamily. Sugar transporter (TC 2.A.1.1) family.

It is found in the membrane. Functionally, high-affinity fructose transporter. This is High-affinity fructose transporter ght6 (ght6) from Schizosaccharomyces pombe (strain 972 / ATCC 24843) (Fission yeast).